A 58-amino-acid polypeptide reads, in one-letter code: ATP synthase F(0) complex subunit k, mitochondrial (58 aa).

N6-acetyllysine; partial occurs at positions 16 and 17. A helical membrane pass occupies residues 23-45; it reads TLTGRMNCVLATYGSIALIVLYF.

As to quaternary structure, component of the ATP synthase complex composed at least of ATP5F1A/subunit alpha, ATP5F1B/subunit beta, ATP5MC1/subunit c (homooctomer), MT-ATP6/subunit a, MT-ATP8/subunit 8, ATP5ME/subunit e, ATP5MF/subunit f, ATP5MG/subunit g, ATP5MK/subunit k, ATP5MJ/subunit j, ATP5F1C/subunit gamma, ATP5F1D/subunit delta, ATP5F1E/subunit epsilon, ATP5PF/subunit F6, ATP5PB/subunit b, ATP5PD/subunit d, ATP5PO/subunit OSCP. ATP synthase complex consists of a soluble F(1) head domain (subunits alpha(3) and beta(3)) - the catalytic core - and a membrane F(0) domain - the membrane proton channel (subunits c, a, 8, e, f, g, k and j). These two domains are linked by a central stalk (subunits gamma, delta, and epsilon) rotating inside the F1 region and a stationary peripheral stalk (subunits F6, b, d, and OSCP). The ATP synthase complex/complex V exists as a monomeric and a dimeric supercomplex that helps shape mitochondrial cristae to optimize proton flow.

It is found in the mitochondrion membrane. Its function is as follows. Subunit k, of the mitochondrial membrane ATP synthase complex (F(1)F(0) ATP synthase or Complex V) that produces ATP from ADP in the presence of a proton gradient across the membrane which is generated by electron transport complexes of the respiratory chain. ATP synthase complex consist of a soluble F(1) head domain - the catalytic core - and a membrane F(1) domain - the membrane proton channel. These two domains are linked by a central stalk rotating inside the F(1) region and a stationary peripheral stalk. During catalysis, ATP synthesis in the catalytic domain of F(1) is coupled via a rotary mechanism of the central stalk subunits to proton translocation. In vivo, can only synthesize ATP although its ATP hydrolase activity can be activated artificially in vitro. Part of the complex F(0) domain. Required for dimerization of the ATP synthase complex and as such regulates ATP synthesis in the mitochondria. The polypeptide is ATP synthase F(0) complex subunit k, mitochondrial (Bos taurus (Bovine)).